The chain runs to 619 residues: Threonine--tRNA ligase (619 aa).

Positions 1-143 (MQLLLIHSDF…SRSIRIGEGE (143 aa)) are editing domain. The segment at 201–500 (PHVELMRRLE…AANGGLPMLP (300 aa)) is catalytic. Residues Cys-293, His-345, and His-469 each contribute to the Zn(2+) site.

It belongs to the class-II aminoacyl-tRNA synthetase family. Homodimer. Requires Zn(2+) as cofactor.

Its subcellular location is the cytoplasm. The enzyme catalyses tRNA(Thr) + L-threonine + ATP = L-threonyl-tRNA(Thr) + AMP + diphosphate + H(+). In terms of biological role, catalyzes the attachment of threonine to tRNA(Thr) in a two-step reaction: L-threonine is first activated by ATP to form Thr-AMP and then transferred to the acceptor end of tRNA(Thr). Also edits incorrectly charged L-seryl-tRNA(Thr). This Methanothrix thermoacetophila (strain DSM 6194 / JCM 14653 / NBRC 101360 / PT) (Methanosaeta thermophila) protein is Threonine--tRNA ligase.